We begin with the raw amino-acid sequence, 87 residues long: Ribonuclease P protein component 1 (87 aa).

It belongs to the eukaryotic/archaeal RNase P protein component 1 family. As to quaternary structure, consists of a catalytic RNA component and at least 4-5 protein subunits.

The protein resides in the cytoplasm. The enzyme catalyses Endonucleolytic cleavage of RNA, removing 5'-extranucleotides from tRNA precursor.. Its function is as follows. Part of ribonuclease P, a protein complex that generates mature tRNA molecules by cleaving their 5'-ends. The polypeptide is Ribonuclease P protein component 1 (Thermoplasma acidophilum (strain ATCC 25905 / DSM 1728 / JCM 9062 / NBRC 15155 / AMRC-C165)).